A 357-amino-acid chain; its full sequence is Phospho-N-acetylmuramoyl-pentapeptide-transferase (357 aa).

10 consecutive transmembrane segments (helical) span residues 23-43 (AIFS…YFIY), 70-90 (TMGG…YCNL), 91-111 (SNIY…IGFI), 127-147 (LKWK…MIKI), 171-191 (YLYV…VNLT), 196-216 (GLAI…SLFS), 236-256 (LAIL…FNSY), 260-280 (VFMG…IAIL), 286-306 (LLII…LQII), and 334-354 (LIIV…LISL).

The protein belongs to the glycosyltransferase 4 family. MraY subfamily. Mg(2+) serves as cofactor.

The protein resides in the cell inner membrane. It carries out the reaction UDP-N-acetyl-alpha-D-muramoyl-L-alanyl-gamma-D-glutamyl-meso-2,6-diaminopimeloyl-D-alanyl-D-alanine + di-trans,octa-cis-undecaprenyl phosphate = di-trans,octa-cis-undecaprenyl diphospho-N-acetyl-alpha-D-muramoyl-L-alanyl-D-glutamyl-meso-2,6-diaminopimeloyl-D-alanyl-D-alanine + UMP. Its pathway is cell wall biogenesis; peptidoglycan biosynthesis. Functionally, catalyzes the initial step of the lipid cycle reactions in the biosynthesis of the cell wall peptidoglycan: transfers peptidoglycan precursor phospho-MurNAc-pentapeptide from UDP-MurNAc-pentapeptide onto the lipid carrier undecaprenyl phosphate, yielding undecaprenyl-pyrophosphoryl-MurNAc-pentapeptide, known as lipid I. The sequence is that of Phospho-N-acetylmuramoyl-pentapeptide-transferase from Buchnera aphidicola subsp. Acyrthosiphon pisum (strain Tuc7).